A 949-amino-acid polypeptide reads, in one-letter code: Translation initiation factor IF-2 (949 aa).

Disordered stretches follow at residues 46–82 (LTAS…EAEA), 145–176 (EPAV…ERAS), and 188–361 (IPIT…KTEL). The segment covering 152-162 (ASPAVTAAKPV) has biased composition (low complexity). The span at 163–172 (PATPAAPPQP) shows a compositional bias: pro residues. Residues 263–276 (PRDAAAPRPAGARP) show a composition bias toward low complexity. Over residues 334-344 (SREERQFDPFH) the composition is skewed to basic and acidic residues. Residues 449–618 (ERPPVVTIMG…LLQADLMDLK (170 aa)) enclose the tr-type G domain. Residues 458–465 (GHVDHGKT) form a G1 region. 458 to 465 (GHVDHGKT) lines the GTP pocket. The interval 483–487 (GITQH) is G2. Residues 504–507 (DTPG) form a G3 region. Residues 504 to 508 (DTPGH) and 558 to 561 (NKID) contribute to the GTP site. Positions 558-561 (NKID) are G4. Residues 594 to 596 (SAK) form a G5 region.

The protein belongs to the TRAFAC class translation factor GTPase superfamily. Classic translation factor GTPase family. IF-2 subfamily.

It is found in the cytoplasm. Functionally, one of the essential components for the initiation of protein synthesis. Protects formylmethionyl-tRNA from spontaneous hydrolysis and promotes its binding to the 30S ribosomal subunits. Also involved in the hydrolysis of GTP during the formation of the 70S ribosomal complex. This Trichlorobacter lovleyi (strain ATCC BAA-1151 / DSM 17278 / SZ) (Geobacter lovleyi) protein is Translation initiation factor IF-2.